A 395-amino-acid polypeptide reads, in one-letter code: Chaperone protein DnaJ (395 aa).

Positions 4-69 constitute a J domain; that stretch reads DYYEVLGLSR…DKRRRYDQFG (66 aa). A CR-type zinc finger spans residues 151–232; sequence GVEKTLKIKK…CYGEGIKQGE (82 aa). 8 residues coordinate Zn(2+): Cys-164, Cys-167, Cys-180, Cys-183, Cys-206, Cys-209, Cys-220, and Cys-223. CXXCXGXG motif repeat units lie at residues 164–171, 180–187, 206–213, and 220–227; these read CTECNGTG, CPTCHGSG, CPTCGGEG, and CVSCYGEG.

This sequence belongs to the DnaJ family. Homodimer. The cofactor is Zn(2+).

The protein resides in the cytoplasm. Functionally, participates actively in the response to hyperosmotic and heat shock by preventing the aggregation of stress-denatured proteins and by disaggregating proteins, also in an autonomous, DnaK-independent fashion. Unfolded proteins bind initially to DnaJ; upon interaction with the DnaJ-bound protein, DnaK hydrolyzes its bound ATP, resulting in the formation of a stable complex. GrpE releases ADP from DnaK; ATP binding to DnaK triggers the release of the substrate protein, thus completing the reaction cycle. Several rounds of ATP-dependent interactions between DnaJ, DnaK and GrpE are required for fully efficient folding. Also involved, together with DnaK and GrpE, in the DNA replication of plasmids through activation of initiation proteins. This is Chaperone protein DnaJ from Chlorobium phaeobacteroides (strain DSM 266 / SMG 266 / 2430).